Consider the following 664-residue polypeptide: Pentatricopeptide repeat-containing protein At1g10910, chloroplastic (664 aa).

The transit peptide at 1 to 72 (METPLLVGLE…KRHSNSYLAR (72 aa)) directs the protein to the chloroplast. PPR repeat units follow at residues 165–199 (NVYI…GLKP), 200–235 (DVVT…GIQM), 236–270 (DSVM…GHSP), 271–305 (NIYH…GLVP), 306–340 (NKVM…GYAE), 341–375 (NEMP…GVRS), 376–406 (DGYA…SETT), 411–445 (DLVM…AVSP), and 446–480 (DYNT…GHRL).

Belongs to the PPR family. P subfamily.

It is found in the plastid. Its subcellular location is the chloroplast. This Arabidopsis thaliana (Mouse-ear cress) protein is Pentatricopeptide repeat-containing protein At1g10910, chloroplastic.